The primary structure comprises 342 residues: UDP-3-O-acylglucosamine N-acyltransferase (342 aa).

Catalysis depends on histidine 241, which acts as the Proton acceptor.

Belongs to the transferase hexapeptide repeat family. LpxD subfamily. As to quaternary structure, homotrimer.

It catalyses the reaction a UDP-3-O-[(3R)-3-hydroxyacyl]-alpha-D-glucosamine + a (3R)-hydroxyacyl-[ACP] = a UDP-2-N,3-O-bis[(3R)-3-hydroxyacyl]-alpha-D-glucosamine + holo-[ACP] + H(+). Its pathway is bacterial outer membrane biogenesis; LPS lipid A biosynthesis. Catalyzes the N-acylation of UDP-3-O-acylglucosamine using 3-hydroxyacyl-ACP as the acyl donor. Is involved in the biosynthesis of lipid A, a phosphorylated glycolipid that anchors the lipopolysaccharide to the outer membrane of the cell. This is UDP-3-O-acylglucosamine N-acyltransferase from Pasteurella multocida (strain Pm70).